A 379-amino-acid chain; its full sequence is MKNEMLALILAGGQGTRLGKLTQSIAKPAVQFGGRYRIIDFALSNCANSGINNVGVITQYQPLELNTHIGNGSSWGLDGIDSGVTVLQPYSATEGNRWFQGTSHAIYQNIDYIDRINPEYVLILSGDHIYKMNYDDMLQTHKDNLASLTVAVLDVPLKEASRFGIMNTDSNDRIVEFEEKPEHPKSTKASMGIYIFDWKRLRTVLIDGEKNGIDMSDFGKNVIPAYLESGERVYTYNFDGYWKDVGTIESLWEANMEYIGEDNKLHSRDRSWKIYSKNLIAPPNFMTEDANVKDSLVVDGCFVAGNVEHSILSTNVQVKPNAIIKDSFVMSGATIGEGAKINRAIIGEDAVIGDGVVIDGSKEVEVIGYKEVAGVPNED.

Alpha-D-glucose 1-phosphate-binding positions include glycine 164, 179–180 (EK), and serine 190.

The protein belongs to the bacterial/plant glucose-1-phosphate adenylyltransferase family. Homotetramer.

It catalyses the reaction alpha-D-glucose 1-phosphate + ATP + H(+) = ADP-alpha-D-glucose + diphosphate. Its pathway is glycan biosynthesis; glycogen biosynthesis. Its function is as follows. Involved in the biosynthesis of ADP-glucose, a building block required for the elongation reactions to produce glycogen. Catalyzes the reaction between ATP and alpha-D-glucose 1-phosphate (G1P) to produce pyrophosphate and ADP-Glc. The protein is Glucose-1-phosphate adenylyltransferase of Streptococcus agalactiae serotype Ia (strain ATCC 27591 / A909 / CDC SS700).